The following is a 120-amino-acid chain: MKILFVLISILYAVYCFSSEEDVDSAYLANELEPVEDINSEQYAALEPKEEQGRSCADMGQDCKDDCDCCLNIATCNCWFGRYFCSCTFGDYQTCLRKKGKCKRNRPQSCPRSNLNRKKG.

The signal sequence occupies residues 1–16 (MKILFVLISILYAVYC). A propeptide spanning residues 17–54 (FSSEEDVDSAYLANELEPVEDINSEQYAALEPKEEQGR) is cleaved from the precursor. 4 disulfides stabilise this stretch: Cys56-Cys70, Cys63-Cys76, Cys69-Cys87, and Cys78-Cys85. The Agouti domain maps to 56 to 95 (CADMGQDCKDDCDCCLNIATCNCWFGRYFCSCTFGDYQTC).

It belongs to the neurotoxin 05 (agouti) family. Post-translationally, contains 6 disulfide bonds. In terms of tissue distribution, expressed by the venom gland.

It localises to the secreted. This is U13-lycotoxin-Ls1a from Lycosa singoriensis (Wolf spider).